We begin with the raw amino-acid sequence, 447 residues long: Na(+)-translocating NADH-quinone reductase subunit A (447 aa).

It belongs to the NqrA family. Composed of six subunits; NqrA, NqrB, NqrC, NqrD, NqrE and NqrF.

It carries out the reaction a ubiquinone + n Na(+)(in) + NADH + H(+) = a ubiquinol + n Na(+)(out) + NAD(+). In terms of biological role, NQR complex catalyzes the reduction of ubiquinone-1 to ubiquinol by two successive reactions, coupled with the transport of Na(+) ions from the cytoplasm to the periplasm. NqrA to NqrE are probably involved in the second step, the conversion of ubisemiquinone to ubiquinol. The polypeptide is Na(+)-translocating NADH-quinone reductase subunit A (Neisseria gonorrhoeae (strain NCCP11945)).